The following is a 461-amino-acid chain: Putative aldehyde dehydrogenase FUS7 (461 aa).

Residue Gly-220–Gly-225 coordinates NAD(+). Catalysis depends on residues Glu-242 and Cys-276.

This sequence belongs to the aldehyde dehydrogenase family.

It carries out the reaction an aldehyde + NAD(+) + H2O = a carboxylate + NADH + 2 H(+). In terms of biological role, putative aldehyde dehydrogenase; part of the gene cluster that mediates the biosynthesis of the mycotoxin fusarin C. Within the cluster, FUS1, FUS2, FUS8 and FUS9 are sufficient for fusarin production. The other FUS cluster members are not essential for fusarin C biosynthesis. This is Putative aldehyde dehydrogenase FUS7 from Gibberella moniliformis (strain M3125 / FGSC 7600) (Maize ear and stalk rot fungus).